The chain runs to 619 residues: DNA mismatch repair protein MutL (619 aa).

Belongs to the DNA mismatch repair MutL/HexB family.

In terms of biological role, this protein is involved in the repair of mismatches in DNA. It is required for dam-dependent methyl-directed DNA mismatch repair. May act as a 'molecular matchmaker', a protein that promotes the formation of a stable complex between two or more DNA-binding proteins in an ATP-dependent manner without itself being part of a final effector complex. The polypeptide is DNA mismatch repair protein MutL (Shewanella frigidimarina (strain NCIMB 400)).